The sequence spans 535 residues: Glucans biosynthesis protein D 1 (535 aa).

Residues 1–28 (MHRRDLLKQLAAGFLALAPGLTPSTASA) constitute a signal peptide (tat-type signal). The segment at 275-287 (RTDRAGDRQSAAR) is insert.

Belongs to the OpgD/OpgG family. Post-translationally, predicted to be exported by the Tat system. The position of the signal peptide cleavage has not been experimentally proven.

The protein resides in the periplasm. The protein operates within glycan metabolism; osmoregulated periplasmic glucan (OPG) biosynthesis. Probably involved in the control of the structural glucose backbone of osmoregulated periplasmic glucans (OPGs). The protein is Glucans biosynthesis protein D 1 (opgD1) of Ralstonia nicotianae (strain ATCC BAA-1114 / GMI1000) (Ralstonia solanacearum).